The following is a 778-amino-acid chain: MEKKILEQLEFEKVKEQFWPYLQTEQGQLELDLLEPIANKDKIQAYFTELEEMAAIFVEHHHFALGGLSDVSESMQRLDLEADLSIQELLVIKKLLQVSAEVCRFYADLENVDLVALKALFEKIESFPSLQGSLQAINDAGFVEGFASPELESIRRQISNKEHASRQLLQDILKKQAAYLSESLIASRNGRSVLPVKNTYRHKVAGVVHDMSASGSTVYIEPRALVSLNEELTQLQADERHEIGRILHELSEQLRPHSRSLRNNAWLLGHLDLVRAKYLYMQAKQATVPVISDDKSLQLLNARHPLIQNPVANDLHFANDLAVIVITGPNTGGKTIMLKTLGLAQVMAQSGLPILADKGSRVAVFNGIYADIGDEQSIEQSLSTFSSHMTHIVEILNQADSDSLILFDELGAGTDPQEGASLAMAILEQLRLTNIKTMATTHYPELKAYGIETAYVENASMAFDNVSLKPTYRFMQGVPGRSNAFDIARRLGLAEHIVKEAQAMTATDHDVNRIIEQLEQQTLESRKRLEHIKEVEQDNLKFNRAVKKLYNEFSHAKDKELEKAALEAREIVDIALAESDSILSQLHEKAELKPHEIIEAKHRLKQLAPEQSLSQNKVLKQAKKWRAPRVGDDIIVTAYGQRGTLLAQLKDKRWEAQVGLIKLTLKEDEFSLVKLKEEAQQPKKRAVKVVKKAATGKGPRARLDLRGKRYEEAMQELDAFIDQALLNNMSQVDIIHGIGTGVIREAVGKYLRRNKHVKSFGYAPQNAGGSGCTIANLG.

328–335 (GPNTGGKT) contacts ATP. Positions 703–778 (LDLRGKRYEE…GSGCTIANLG (76 aa)) constitute a Smr domain.

The protein belongs to the DNA mismatch repair MutS family. MutS2 subfamily. In terms of assembly, homodimer. Binds to stalled ribosomes, contacting rRNA.

Its function is as follows. Endonuclease that is involved in the suppression of homologous recombination and thus may have a key role in the control of bacterial genetic diversity. Acts as a ribosome collision sensor, splitting the ribosome into its 2 subunits. Detects stalled/collided 70S ribosomes which it binds and splits by an ATP-hydrolysis driven conformational change. Acts upstream of the ribosome quality control system (RQC), a ribosome-associated complex that mediates the extraction of incompletely synthesized nascent chains from stalled ribosomes and their subsequent degradation. Probably generates substrates for RQC. The sequence is that of Endonuclease MutS2 from Streptococcus equi subsp. zooepidemicus (strain H70).